Reading from the N-terminus, the 117-residue chain is Large ribosomal subunit protein eL18 (117 aa).

Belongs to the eukaryotic ribosomal protein eL18 family.

This chain is Large ribosomal subunit protein eL18, found in Archaeoglobus fulgidus (strain ATCC 49558 / DSM 4304 / JCM 9628 / NBRC 100126 / VC-16).